We begin with the raw amino-acid sequence, 273 residues long: 4-hydroxy-tetrahydrodipicolinate reductase (273 aa).

Residues 12–17 (GAGGRM) and Glu-38 each bind NAD(+). Arg-39 is a binding site for NADP(+). Residues 102-104 (GTT) and 126-129 (AANF) contribute to the NAD(+) site. The active-site Proton donor/acceptor is the His-159. Residue His-160 coordinates (S)-2,3,4,5-tetrahydrodipicolinate. Catalysis depends on Lys-163, which acts as the Proton donor. 169 to 170 (GT) serves as a coordination point for (S)-2,3,4,5-tetrahydrodipicolinate.

Belongs to the DapB family. In terms of assembly, homotetramer.

It localises to the cytoplasm. The enzyme catalyses (S)-2,3,4,5-tetrahydrodipicolinate + NAD(+) + H2O = (2S,4S)-4-hydroxy-2,3,4,5-tetrahydrodipicolinate + NADH + H(+). It carries out the reaction (S)-2,3,4,5-tetrahydrodipicolinate + NADP(+) + H2O = (2S,4S)-4-hydroxy-2,3,4,5-tetrahydrodipicolinate + NADPH + H(+). It participates in amino-acid biosynthesis; L-lysine biosynthesis via DAP pathway; (S)-tetrahydrodipicolinate from L-aspartate: step 4/4. Functionally, catalyzes the conversion of 4-hydroxy-tetrahydrodipicolinate (HTPA) to tetrahydrodipicolinate. In Yersinia enterocolitica serotype O:8 / biotype 1B (strain NCTC 13174 / 8081), this protein is 4-hydroxy-tetrahydrodipicolinate reductase.